The chain runs to 258 residues: Ribosomal RNA small subunit methyltransferase J (258 aa).

Residues 104–105 (RD), 120–121 (ER), and Asp-175 each bind S-adenosyl-L-methionine.

It belongs to the methyltransferase superfamily. RsmJ family.

Its subcellular location is the cytoplasm. It carries out the reaction guanosine(1516) in 16S rRNA + S-adenosyl-L-methionine = N(2)-methylguanosine(1516) in 16S rRNA + S-adenosyl-L-homocysteine + H(+). Specifically methylates the guanosine in position 1516 of 16S rRNA. This chain is Ribosomal RNA small subunit methyltransferase J, found in Chromobacterium violaceum (strain ATCC 12472 / DSM 30191 / JCM 1249 / CCUG 213 / NBRC 12614 / NCIMB 9131 / NCTC 9757 / MK).